Reading from the N-terminus, the 485-residue chain is Ribulose bisphosphate carboxylase large chain (485 aa).

Substrate contacts are provided by Asn124 and Thr174. The active-site Proton acceptor is Lys176. Lys178 lines the substrate pocket. Positions 202, 204, and 205 each coordinate Mg(2+). Residue Lys202 is modified to N6-carboxylysine. The active-site Proton acceptor is His294. Residues Arg295, His327, and Ser379 each coordinate substrate.

The protein belongs to the RuBisCO large chain family. Type I subfamily. In terms of assembly, heterohexadecamer of 8 large chains and 8 small chains. Mg(2+) is required as a cofactor.

It carries out the reaction 2 (2R)-3-phosphoglycerate + 2 H(+) = D-ribulose 1,5-bisphosphate + CO2 + H2O. It catalyses the reaction D-ribulose 1,5-bisphosphate + O2 = 2-phosphoglycolate + (2R)-3-phosphoglycerate + 2 H(+). RuBisCO catalyzes two reactions: the carboxylation of D-ribulose 1,5-bisphosphate, the primary event in carbon dioxide fixation, as well as the oxidative fragmentation of the pentose substrate. Both reactions occur simultaneously and in competition at the same active site. This Rhodopseudomonas palustris (strain TIE-1) protein is Ribulose bisphosphate carboxylase large chain.